Here is a 267-residue protein sequence, read N- to C-terminus: Zein-alpha Z4 (267 aa).

Residues 1–21 form the signal peptide; the sequence is MAAKIFCLIMLLGLSASAATA.

This sequence belongs to the zein family.

In terms of biological role, zeins are major seed storage proteins. The chain is Zein-alpha Z4 from Zea mays (Maize).